Here is a 177-residue protein sequence, read N- to C-terminus: Shikimate kinase (177 aa).

17 to 22 (GAGKST) serves as a coordination point for ATP. Ser-21 is a Mg(2+) binding site. 3 residues coordinate substrate: Asp-39, Arg-63, and Gly-85. Arg-123 contributes to the ATP binding site. Arg-142 provides a ligand contact to substrate. Residue Arg-160 participates in ATP binding.

The protein belongs to the shikimate kinase family. In terms of assembly, monomer. Mg(2+) serves as cofactor.

The protein localises to the cytoplasm. It catalyses the reaction shikimate + ATP = 3-phosphoshikimate + ADP + H(+). It participates in metabolic intermediate biosynthesis; chorismate biosynthesis; chorismate from D-erythrose 4-phosphate and phosphoenolpyruvate: step 5/7. Functionally, catalyzes the specific phosphorylation of the 3-hydroxyl group of shikimic acid using ATP as a cosubstrate. In Halorhodospira halophila (strain DSM 244 / SL1) (Ectothiorhodospira halophila (strain DSM 244 / SL1)), this protein is Shikimate kinase.